A 389-amino-acid polypeptide reads, in one-letter code: 23S rRNA (uracil(747)-C(5))-methyltransferase RlmC (389 aa).

The [4Fe-4S] cluster site is built by Cys6, Cys14, Cys17, and Cys92. S-adenosyl-L-methionine is bound by residues Gln217, Phe246, Glu273, and Asn319. Cys346 functions as the Nucleophile in the catalytic mechanism.

This sequence belongs to the class I-like SAM-binding methyltransferase superfamily. RNA M5U methyltransferase family. RlmC subfamily.

The enzyme catalyses uridine(747) in 23S rRNA + S-adenosyl-L-methionine = 5-methyluridine(747) in 23S rRNA + S-adenosyl-L-homocysteine + H(+). Its function is as follows. Catalyzes the formation of 5-methyl-uridine at position 747 (m5U747) in 23S rRNA. The polypeptide is 23S rRNA (uracil(747)-C(5))-methyltransferase RlmC (Glaesserella parasuis serovar 5 (strain SH0165) (Haemophilus parasuis)).